Here is a 209-residue protein sequence, read N- to C-terminus: Kynurenine formamidase (209 aa).

F18 is a binding site for substrate. Residues H48, H52, and D54 each coordinate Zn(2+). H58 acts as the Proton donor/acceptor in catalysis. 2 residues coordinate Zn(2+): H160 and E172.

It belongs to the Cyclase 1 superfamily. KynB family. In terms of assembly, homodimer. Zn(2+) serves as cofactor.

The enzyme catalyses N-formyl-L-kynurenine + H2O = L-kynurenine + formate + H(+). It functions in the pathway amino-acid degradation; L-tryptophan degradation via kynurenine pathway; L-kynurenine from L-tryptophan: step 2/2. Functionally, catalyzes the hydrolysis of N-formyl-L-kynurenine to L-kynurenine, the second step in the kynurenine pathway of tryptophan degradation. This is Kynurenine formamidase from Bordetella petrii (strain ATCC BAA-461 / DSM 12804 / CCUG 43448).